A 142-amino-acid chain; its full sequence is Large ribosomal subunit protein uL11 (142 aa).

Belongs to the universal ribosomal protein uL11 family. As to quaternary structure, part of the ribosomal stalk of the 50S ribosomal subunit. Interacts with L10 and the large rRNA to form the base of the stalk. L10 forms an elongated spine to which L12 dimers bind in a sequential fashion forming a multimeric L10(L12)X complex. One or more lysine residues are methylated.

In terms of biological role, forms part of the ribosomal stalk which helps the ribosome interact with GTP-bound translation factors. This chain is Large ribosomal subunit protein uL11, found in Shewanella amazonensis (strain ATCC BAA-1098 / SB2B).